A 264-amino-acid polypeptide reads, in one-letter code: GTP cyclohydrolase FolE2 (264 aa).

The protein belongs to the GTP cyclohydrolase IV family.

It carries out the reaction GTP + H2O = 7,8-dihydroneopterin 3'-triphosphate + formate + H(+). Its pathway is cofactor biosynthesis; 7,8-dihydroneopterin triphosphate biosynthesis; 7,8-dihydroneopterin triphosphate from GTP: step 1/1. In terms of biological role, converts GTP to 7,8-dihydroneopterin triphosphate. The protein is GTP cyclohydrolase FolE2 of Nitratidesulfovibrio vulgaris (strain ATCC 29579 / DSM 644 / CCUG 34227 / NCIMB 8303 / VKM B-1760 / Hildenborough) (Desulfovibrio vulgaris).